The chain runs to 428 residues: Tyrosine--tRNA ligase (428 aa).

Tyr41 provides a ligand contact to L-tyrosine. The 'HIGH' region motif lies at 46–55 (PTADSLHLGH). The L-tyrosine site is built by Tyr179 and Gln183. Positions 239-243 (KFGKT) match the 'KMSKS' region motif. Lys242 is an ATP binding site. In terms of domain architecture, S4 RNA-binding spans 361 to 418 (ADLMQALVDAELQPSRGQARKTIASNAVTINGEKQSDPEYIFNDEDRLFGRYTLLRRG).

The protein belongs to the class-I aminoacyl-tRNA synthetase family. TyrS type 1 subfamily. Homodimer.

The protein resides in the cytoplasm. The catalysed reaction is tRNA(Tyr) + L-tyrosine + ATP = L-tyrosyl-tRNA(Tyr) + AMP + diphosphate + H(+). Its function is as follows. Catalyzes the attachment of tyrosine to tRNA(Tyr) in a two-step reaction: tyrosine is first activated by ATP to form Tyr-AMP and then transferred to the acceptor end of tRNA(Tyr). The chain is Tyrosine--tRNA ligase from Salmonella paratyphi C (strain RKS4594).